A 159-amino-acid chain; its full sequence is Ribosome maturation factor RimP (159 aa).

This sequence belongs to the RimP family.

The protein resides in the cytoplasm. In terms of biological role, required for maturation of 30S ribosomal subunits. The sequence is that of Ribosome maturation factor RimP from Lacticaseibacillus casei (strain BL23) (Lactobacillus casei).